The sequence spans 377 residues: uncharacterized protein (377 aa).

A disordered region spans residues 1–46 (MLAGLRRRGSMTTPPGPEIPPPHQGGFYSAGHHPQRPWPETPPPKT). 2 stretches are compositionally biased toward pro residues: residues 14 to 23 (PPGPEIPPPH) and 36 to 45 (RPWPETPPPK). The chain crosses the membrane as a helical span at residues 53–73 (MLGAVALLAVVGVTVAVTLAV). Residues 77–107 (DKRDAIPPGSGVSGSPTASDIASADDSGPVS) form a disordered region.

The protein resides in the cell inner membrane. In terms of biological role, may be involved in the ESX-1 / type VII specialized secretion system (T7SS), which exports several proteins including EsxA and EsxB. Involved in DNA conjugation in the recipient strain. This is an uncharacterized protein from Mycolicibacterium smegmatis (strain MKD8) (Mycobacterium smegmatis).